The chain runs to 869 residues: DNA mismatch repair protein MutS (869 aa).

624–631 (GPNMGGKS) provides a ligand contact to ATP.

The protein belongs to the DNA mismatch repair MutS family.

Functionally, this protein is involved in the repair of mismatches in DNA. It is possible that it carries out the mismatch recognition step. This protein has a weak ATPase activity. This is DNA mismatch repair protein MutS from Solibacter usitatus (strain Ellin6076).